The sequence spans 117 residues: Large ribosomal subunit protein eL18 (117 aa).

Belongs to the eukaryotic ribosomal protein eL18 family.

This Halobacterium salinarum (strain ATCC 29341 / DSM 671 / R1) protein is Large ribosomal subunit protein eL18.